The sequence spans 455 residues: uncharacterized protein (455 aa).

An N-terminal signal peptide occupies residues 1-24; the sequence is MKTTKILLHTGVLALSLLATQVMA.

This is an uncharacterized protein from Pseudomonas aeruginosa (strain ATCC 15692 / DSM 22644 / CIP 104116 / JCM 14847 / LMG 12228 / 1C / PRS 101 / PAO1).